The primary structure comprises 84 residues: Exodeoxyribonuclease 7 small subunit (84 aa).

This sequence belongs to the XseB family. As to quaternary structure, heterooligomer composed of large and small subunits.

It localises to the cytoplasm. It catalyses the reaction Exonucleolytic cleavage in either 5'- to 3'- or 3'- to 5'-direction to yield nucleoside 5'-phosphates.. Functionally, bidirectionally degrades single-stranded DNA into large acid-insoluble oligonucleotides, which are then degraded further into small acid-soluble oligonucleotides. The chain is Exodeoxyribonuclease 7 small subunit from Bartonella quintana (strain Toulouse) (Rochalimaea quintana).